Here is a 301-residue protein sequence, read N- to C-terminus: 4-hydroxy-tetrahydrodipicolinate synthase (301 aa).

Thr-50 lines the pyruvate pocket. The active-site Proton donor/acceptor is Tyr-138. The active-site Schiff-base intermediate with substrate is Lys-167. Residue Ile-209 coordinates pyruvate.

The protein belongs to the DapA family. Homotetramer; dimer of dimers.

Its subcellular location is the cytoplasm. It catalyses the reaction L-aspartate 4-semialdehyde + pyruvate = (2S,4S)-4-hydroxy-2,3,4,5-tetrahydrodipicolinate + H2O + H(+). It participates in amino-acid biosynthesis; L-lysine biosynthesis via DAP pathway; (S)-tetrahydrodipicolinate from L-aspartate: step 3/4. Functionally, catalyzes the condensation of (S)-aspartate-beta-semialdehyde [(S)-ASA] and pyruvate to 4-hydroxy-tetrahydrodipicolinate (HTPA). This chain is 4-hydroxy-tetrahydrodipicolinate synthase, found in Sorangium cellulosum (strain So ce56) (Polyangium cellulosum (strain So ce56)).